The sequence spans 320 residues: MTAGQWRSHLTDDQQRQVRDLVTVATQVDGVAPVGEQVLRELAQQRTEHLLVEDQSPGKSAIGYLNLSPAHGADAAMAELVVHPQARRRGIATAMVRAALAKTGGRNQFWAHGTLAPARATASALGLTPVRELVQMRRSLRQLPEPVIPNGLQIRTYAGTEDDAELLRVNNAAFAYHPEQGGWTEADLAERRGEPWFDPAGLFLALEGSEGAEDSPSGQPRLLGFHWTKIHLDDPGLGEVYVLGVDPAAQGRGLGRTLTMIGLRSLTQRLGDRDLGHESTVMLYVESDNIAAVRTYQGLGFSTHSVDTAYALAAPDAALA.

2 N-acetyltransferase domains span residues 8–141 and 152–320; these read SHLT…RSLR and LQIR…AALA. Residue glutamate 36 participates in 1D-myo-inositol 2-(L-cysteinylamino)-2-deoxy-alpha-D-glucopyranoside binding. Acetyl-CoA-binding positions include 80-82 and 88-93; these read LVV and RRGIAT. 1D-myo-inositol 2-(L-cysteinylamino)-2-deoxy-alpha-D-glucopyranoside-binding residues include glutamate 179, lysine 229, and glutamate 239. Residues 243-245 and 250-256 each bind acetyl-CoA; these read LGV and QGRGLGR. Tyrosine 284 provides a ligand contact to 1D-myo-inositol 2-(L-cysteinylamino)-2-deoxy-alpha-D-glucopyranoside. Residue 289-294 coordinates acetyl-CoA; it reads NIAAVR.

It belongs to the acetyltransferase family. MshD subfamily. Monomer.

The enzyme catalyses 1D-myo-inositol 2-(L-cysteinylamino)-2-deoxy-alpha-D-glucopyranoside + acetyl-CoA = mycothiol + CoA + H(+). Functionally, catalyzes the transfer of acetyl from acetyl-CoA to desacetylmycothiol (Cys-GlcN-Ins) to form mycothiol. The protein is Mycothiol acetyltransferase of Mycobacterium ulcerans (strain Agy99).